The chain runs to 505 residues: Glutamyl-tRNA(Gln) amidotransferase subunit B, mitochondrial (505 aa).

Belongs to the GatB/GatE family. GatB subfamily. As to quaternary structure, subunit of the heterotrimeric GatCAB amidotransferase (AdT) complex, composed of A, B and C subunits.

Its subcellular location is the mitochondrion. The catalysed reaction is L-glutamyl-tRNA(Gln) + L-glutamine + ATP + H2O = L-glutaminyl-tRNA(Gln) + L-glutamate + ADP + phosphate + H(+). In terms of biological role, allows the formation of correctly charged Gln-tRNA(Gln) through the transamidation of misacylated Glu-tRNA(Gln) in the mitochondria. The reaction takes place in the presence of glutamine and ATP through an activated gamma-phospho-Glu-tRNA(Gln). The sequence is that of Glutamyl-tRNA(Gln) amidotransferase subunit B, mitochondrial from Schizosaccharomyces japonicus (strain yFS275 / FY16936) (Fission yeast).